The primary structure comprises 580 residues: Phosphatase and actin regulator 1 (580 aa).

Phosphoserine occurs at positions 67 and 78. The residue at position 104 (threonine 104) is a Phosphothreonine. Positions 108–129 (RRRSKFANLGRIFKPWKWRKKK) match the Nuclear localization signal motif. Residues 138–163 (AALERKISMRQSREELIKRGVLKEIY) form an RPEL 1 repeat. Residues 331 to 351 (EQRVPCSTSYHSSGLHSSDGV) are disordered. The span at 337–348 (STSYHSSGLHSS) shows a compositional bias: low complexity. 3 RPEL repeats span residues 422–447 (DSLA…PRQT), 460–485 (TKLT…KPRN), and 498–523 (RRLT…IRFS). A disordered region spans residues 462–494 (LTRRLSQRPTAEELEQRNILKPRNEQEEQEEKR). Residue serine 467 is modified to Phosphoserine. The segment covering 471 to 494 (TAEELEQRNILKPRNEQEEQEEKR) has biased composition (basic and acidic residues). Phosphoserine is present on serine 505.

The protein belongs to the phosphatase and actin regulator family. Interacts (via RPEL repeats) with ACTA1 and PPP1CA; ACTA1 and PPP1CA compete for the same binding site. Selectively expressed in brain. High levels are found in the olfactory tubercle, nucleus accumbens core and shell, caudate-putamen, cerebral cortex, hippocampus and piriform cortex. Moderate to high levels in the olfactory bulb, arcuate and ventromedial hypothalamus, subthalamic nucleus, amygdala, lateral septum, habenula and thalamus. Low expression, if any, in substantia nigra pars compacta/pars reticula and globus pallidus (at protein level).

Its subcellular location is the cytoplasm. The protein resides in the synapse. The protein localises to the nucleus. Functionally, binds actin monomers (G actin) and plays a role in multiple processes including the regulation of actin cytoskeleton dynamics, actin stress fibers formation, cell motility and survival, formation of tubules by endothelial cells, and regulation of PPP1CA activity. Involved in the regulation of cortical neuron migration and dendrite arborization. This chain is Phosphatase and actin regulator 1 (Phactr1), found in Rattus norvegicus (Rat).